Consider the following 739-residue polypeptide: Phosphoribosylformylglycinamidine synthase subunit PurL (739 aa).

His49 is an active-site residue. ATP contacts are provided by Tyr52 and Lys91. Residue Glu93 participates in Mg(2+) binding. Substrate contacts are provided by residues 94 to 97 (SHNH) and Arg116. The Proton acceptor role is filled by His95. Asp117 serves as a coordination point for Mg(2+). Gln240 contacts substrate. Mg(2+) is bound at residue Asp268. Residue 312 to 314 (ESQ) participates in substrate binding. ATP contacts are provided by Asp493 and Gly530. Position 531 (Asn531) interacts with Mg(2+). Ser533 contacts substrate.

Belongs to the FGAMS family. Monomer. Part of the FGAM synthase complex composed of 1 PurL, 1 PurQ and 2 PurS subunits.

It is found in the cytoplasm. It catalyses the reaction N(2)-formyl-N(1)-(5-phospho-beta-D-ribosyl)glycinamide + L-glutamine + ATP + H2O = 2-formamido-N(1)-(5-O-phospho-beta-D-ribosyl)acetamidine + L-glutamate + ADP + phosphate + H(+). It participates in purine metabolism; IMP biosynthesis via de novo pathway; 5-amino-1-(5-phospho-D-ribosyl)imidazole from N(2)-formyl-N(1)-(5-phospho-D-ribosyl)glycinamide: step 1/2. In terms of biological role, part of the phosphoribosylformylglycinamidine synthase complex involved in the purines biosynthetic pathway. Catalyzes the ATP-dependent conversion of formylglycinamide ribonucleotide (FGAR) and glutamine to yield formylglycinamidine ribonucleotide (FGAM) and glutamate. The FGAM synthase complex is composed of three subunits. PurQ produces an ammonia molecule by converting glutamine to glutamate. PurL transfers the ammonia molecule to FGAR to form FGAM in an ATP-dependent manner. PurS interacts with PurQ and PurL and is thought to assist in the transfer of the ammonia molecule from PurQ to PurL. This chain is Phosphoribosylformylglycinamidine synthase subunit PurL, found in Parvibaculum lavamentivorans (strain DS-1 / DSM 13023 / NCIMB 13966).